The primary structure comprises 192 residues: Ion-translocating oxidoreductase complex subunit A (192 aa).

The next 6 membrane-spanning stretches (helical) occupy residues 5–25, 39–59, 72–92, 102–122, 134–154, and 171–191; these read LLLL…FLGL, IGMS…SFLV, LRTM…EMLV, ALGI…VALL, AIYG…FSAM, and AIAM…TGLV.

Belongs to the NqrDE/RnfAE family. In terms of assembly, the complex is composed of six subunits: RnfA, RnfB, RnfC, RnfD, RnfE and RnfG.

Its subcellular location is the cell inner membrane. Functionally, part of a membrane-bound complex that couples electron transfer with translocation of ions across the membrane. This is Ion-translocating oxidoreductase complex subunit A from Shewanella amazonensis (strain ATCC BAA-1098 / SB2B).